Reading from the N-terminus, the 547-residue chain is Ganoderic acid synthetase CYP5150L8 (547 aa).

Residues 2–22 (PDSSLVLVAIAGAAYIFWLVF) traverse the membrane as a helical segment. Cysteine 487 serves as a coordination point for heme.

This sequence belongs to the cytochrome P450 family. Heme is required as a cofactor.

It localises to the membrane. It carries out the reaction lanosterol + reduced [NADPH--hemoprotein reductase] + O2 = 26-hydroxylanosterol + oxidized [NADPH--hemoprotein reductase] + H2O + H(+). It catalyses the reaction 26-hydroxylanosterol + reduced [NADPH--hemoprotein reductase] + O2 = 26-oxolanosterol + oxidized [NADPH--hemoprotein reductase] + 2 H2O + H(+). The catalysed reaction is 26-oxolanosterol + reduced [NADPH--hemoprotein reductase] + O2 = 3beta-hydroxy-lanosta-8, 24-dien-26-oate + oxidized [NADPH--hemoprotein reductase] + H2O + 2 H(+). It participates in secondary metabolite biosynthesis; terpenoid biosynthesis. Its function is as follows. Cytochrome P450 monooxygenase that is involved in the biosynthesis of ganoderic acids (GA), a group of highly oxygenated lanostane-type triterpenoids which well recognized as a main group of unique bioactive compounds in the medicinal mushroom Ganoderma lucidum. CYP5150L8 alone is able to catalyze the three-step oxidations at C-26 from lanosterol to 3-hydroxy-lanosta-8,24-dien-26-oic acid (also called ganoderic acid Z or HLDOA). The methyl group of lanosterol at C-26 is first oxidized into hydroxyl group to form 3-hydroxy-lanosta-8,24-dien-26-ol (HLDO). The hydroxyl group at C-26 of HLDO is further converted into a formyl group to form 3-hydroxy-lanosta-8,24-dien-26-al (HLDA). Finally, the formyl group is oxidized into a carboxyl group to produce 3-hydroxy-lanosta-8,24-dien-26-oic acid (HLDOA). The protein is Ganoderic acid synthetase CYP5150L8 of Ganoderma lucidum (Ling zhi medicinal fungus).